The chain runs to 391 residues: Chorismate synthase (391 aa).

Residue Arg48 coordinates NADP(+). Residues 126-128 (RAS), Gly286, 301-305 (KPTSS), and Arg328 contribute to the FMN site.

Belongs to the chorismate synthase family. The cofactor is FMNH2.

The enzyme catalyses 5-O-(1-carboxyvinyl)-3-phosphoshikimate = chorismate + phosphate. Its pathway is metabolic intermediate biosynthesis; chorismate biosynthesis; chorismate from D-erythrose 4-phosphate and phosphoenolpyruvate: step 7/7. In terms of biological role, catalyzes the anti-1,4-elimination of the C-3 phosphate and the C-6 proR hydrogen from 5-enolpyruvylshikimate-3-phosphate (EPSP) to yield chorismate, which is the branch point compound that serves as the starting substrate for the three terminal pathways of aromatic amino acid biosynthesis. This reaction introduces a second double bond into the aromatic ring system. This Saccharolobus islandicus (strain L.S.2.15 / Lassen #1) (Sulfolobus islandicus) protein is Chorismate synthase.